The primary structure comprises 389 residues: Methionyl-tRNA formyltransferase, mitochondrial (389 aa).

It belongs to the Fmt family.

The protein resides in the mitochondrion. The enzyme catalyses L-methionyl-tRNA(fMet) + (6R)-10-formyltetrahydrofolate = N-formyl-L-methionyl-tRNA(fMet) + (6S)-5,6,7,8-tetrahydrofolate + H(+). Methionyl-tRNA formyltransferase that formylates methionyl-tRNA in mitochondria and is crucial for translation initiation. The protein is Methionyl-tRNA formyltransferase, mitochondrial (MTFMT) of Homo sapiens (Human).